The primary structure comprises 635 residues: tRNA uridine 5-carboxymethylaminomethyl modification enzyme MnmG (635 aa).

19-24 (GAGHAG) is an FAD binding site. 280–294 (GPRYCPSIEDKIVRF) lines the NAD(+) pocket.

Belongs to the MnmG family. As to quaternary structure, homodimer. Heterotetramer of two MnmE and two MnmG subunits. FAD serves as cofactor.

The protein localises to the cytoplasm. In terms of biological role, NAD-binding protein involved in the addition of a carboxymethylaminomethyl (cmnm) group at the wobble position (U34) of certain tRNAs, forming tRNA-cmnm(5)s(2)U34. The protein is tRNA uridine 5-carboxymethylaminomethyl modification enzyme MnmG of Synechocystis sp. (strain ATCC 27184 / PCC 6803 / Kazusa).